Consider the following 433-residue polypeptide: MKVWLASLFLCALVVKNSEGGSVLGAPDESNCGCQNGGVCVSYKYFSRIRRCSCPRKFQGEHCEIDASKTCYHGNGDSYRGKANTDTKGRPCLAWNAPAVLQKPYNAHRPDAISLGLGKHNYCRNPDNQKRPWCYVQIGLRQFVQECMVHDCSLSKKPSSSVDQQGFQCGQKALRPRFKIVGGEFTEVENQPWFAAIYQKNKGGSPPSFKCGGSLISPCWVASAAHCFIQLPKKENYVVYLGQSKESSYNPGEMKFEVEQLILHEYYREDSLAYHNDIALLKIRTSTGQCAQPSRSIQTICLPPRFTDAPFGSDCEITGFGKESESDYLYPKNLKMSVVKLVSHEQCMQPHYYGSEINYKMLCAADPEWKTDSCKGDSGGPLICNIEGRPTLSGIVSWGRGCAEKNKPGVYTRVSHFLDWIQSHIGEEKGLAF.

Positions 1 to 20 (MKVWLASLFLCALVVKNSEG) are cleaved as a signal peptide. The EGF-like domain occupies 28-64 (DESNCGCQNGGVCVSYKYFSRIRRCSCPRKFQGEHCE). Disulfide bonds link Cys32-Cys40, Cys34-Cys52, Cys54-Cys63, Cys71-Cys152, Cys92-Cys134, and Cys123-Cys147. Residues 35–58 (QNGGVCVSYKYFSRIRRCSCPRKF) form a binds urokinase plasminogen activator surface receptor region. The Kringle domain maps to 71 to 152 (CYHGNGDSYR…FVQECMVHDC (82 aa)). A connecting peptide region spans residues 153-179 (SLSKKPSSSVDQQGFQCGQKALRPRFK). The residue at position 159 (Ser159) is a Phosphoserine. 6 disulfides stabilise this stretch: Cys169/Cys301, Cys211/Cys227, Cys219/Cys290, Cys315/Cys384, Cys347/Cys363, and Cys374/Cys402. The Peptidase S1 domain occupies 180–426 (IVGGEFTEVE…FLDWIQSHIG (247 aa)). Active-site charge relay system residues include His226 and Asp277. Ser378 (charge relay system) is an active-site residue.

This sequence belongs to the peptidase S1 family. In terms of assembly, found in high and low molecular mass forms. Each consists of two chains, A and B. The high molecular mass form contains a long chain A which is cleaved to yield a short chain A. Forms heterodimer with SERPINA5. Binds LRP1B; binding is followed by internalization and degradation. Interacts with MRC2. Interacts with PLAUR. In complex with SERPINE1, interacts with PLAUR/uPAR. Interacts with SORL1 and LRP1, either alone or in complex with SERPINE1; these interactions are abolished in the presence of LRPAP1/RAP. The ternary complex composed of PLAUR-PLAU-PAI1 also interacts with SORLA. Produced as an inactive single-chain protein (pro-uPA or sc-uPA), is processed into the active disulfide-linked two-chain form of PLAU/uPA by a proteolytic event mediated, at least, by TMPRSS4.

It localises to the secreted. It carries out the reaction Specific cleavage of Arg-|-Val bond in plasminogen to form plasmin.. Its activity is regulated as follows. Inhibited by SERPINA5. Inhibited by SERPINE1. Specifically cleaves the zymogen plasminogen to form the active enzyme plasmin. The sequence is that of Urokinase-type plasminogen activator (Plau) from Mus musculus (Mouse).